We begin with the raw amino-acid sequence, 69 residues long: Cytochrome c oxidase subunit 8A, mitochondrial (69 aa).

Residues 1–25 (MSSLTPLLLRSLTGPARRLMVPRAQ) constitute a mitochondrion transit peptide. Residues 2 to 19 (SSLTPLLLRSLTGPARRL) carry the SIFI-degron motif. Residues 26–36 (VHSKPPREQLG) are Mitochondrial matrix-facing. The helical transmembrane segment at 37 to 60 (VLDITIGLTSCFVCCLLPAGWVLS) threads the bilayer. Over 61–69 (HLESYKKRE) the chain is Mitochondrial intermembrane.

The protein belongs to the cytochrome c oxidase VIII family. Component of the cytochrome c oxidase (complex IV, CIV), a multisubunit enzyme composed of 14 subunits. The complex is composed of a catalytic core of 3 subunits MT-CO1, MT-CO2 and MT-CO3, encoded in the mitochondrial DNA, and 11 supernumerary subunits COX4I, COX5A, COX5B, COX6A, COX6B, COX6C, COX7A, COX7B, COX7C, COX8 and NDUFA4, which are encoded in the nuclear genome. The complex exists as a monomer or a dimer and forms supercomplexes (SCs) in the inner mitochondrial membrane with NADH-ubiquinone oxidoreductase (complex I, CI) and ubiquinol-cytochrome c oxidoreductase (cytochrome b-c1 complex, complex III, CIII), resulting in different assemblies (supercomplex SCI(1)III(2)IV(1) and megacomplex MCI(2)III(2)IV(2)). In terms of processing, in response to mitochondrial stress, the precursor protein is ubiquitinated by the SIFI complex in the cytoplasm before mitochondrial import, leading to its degradation. Within the SIFI complex, UBR4 initiates ubiquitin chain that are further elongated or branched by KCMF1.

It localises to the mitochondrion inner membrane. The protein operates within energy metabolism; oxidative phosphorylation. Functionally, component of the cytochrome c oxidase, the last enzyme in the mitochondrial electron transport chain which drives oxidative phosphorylation. The respiratory chain contains 3 multisubunit complexes succinate dehydrogenase (complex II, CII), ubiquinol-cytochrome c oxidoreductase (cytochrome b-c1 complex, complex III, CIII) and cytochrome c oxidase (complex IV, CIV), that cooperate to transfer electrons derived from NADH and succinate to molecular oxygen, creating an electrochemical gradient over the inner membrane that drives transmembrane transport and the ATP synthase. Cytochrome c oxidase is the component of the respiratory chain that catalyzes the reduction of oxygen to water. Electrons originating from reduced cytochrome c in the intermembrane space (IMS) are transferred via the dinuclear copper A center (CU(A)) of subunit 2 and heme A of subunit 1 to the active site in subunit 1, a binuclear center (BNC) formed by heme A3 and copper B (CU(B)). The BNC reduces molecular oxygen to 2 water molecules using 4 electrons from cytochrome c in the IMS and 4 protons from the mitochondrial matrix. The sequence is that of Cytochrome c oxidase subunit 8A, mitochondrial (Cox8a) from Rattus norvegicus (Rat).